The sequence spans 393 residues: Methylthioribose-1-phosphate isomerase (393 aa).

The active-site Proton donor is D265.

It belongs to the eIF-2B alpha/beta/delta subunits family. MtnA subfamily.

The protein localises to the cytoplasm. Its subcellular location is the nucleus. It carries out the reaction 5-(methylsulfanyl)-alpha-D-ribose 1-phosphate = 5-(methylsulfanyl)-D-ribulose 1-phosphate. The protein operates within amino-acid biosynthesis; L-methionine biosynthesis via salvage pathway; L-methionine from S-methyl-5-thio-alpha-D-ribose 1-phosphate: step 1/6. Functionally, catalyzes the interconversion of methylthioribose-1-phosphate (MTR-1-P) into methylthioribulose-1-phosphate (MTRu-1-P). The polypeptide is Methylthioribose-1-phosphate isomerase (Cryptococcus neoformans var. neoformans serotype D (strain B-3501A) (Filobasidiella neoformans)).